Here is a 213-residue protein sequence, read N- to C-terminus: MKILLLILIAYLLGSIQTGLWIGKVFFHTNLREHGSGNTGTTNTFRVLGKTAGTITFLVDMLKGTLAVLLPIWLGVTEVSPLIIGFFAIIGHVFPFFTGFKGGKAVATSAGVLLGFVPLYFVFLLLVFALTLYLTSMISFSSITAAVVGLITLATFPAIHFLLDGYDPIFSAVLIIIALVIIFRHTENIARIRNHRENLVPFGLNLTKQNPNK.

6 consecutive transmembrane segments (helical) span residues 3–23 (ILLL…LWIG), 55–75 (ITFL…IWLG), 80–100 (SPLI…FTGF), 110–130 (AGVL…VFAL), 142–162 (SITA…IHFL), and 163–183 (LDGY…VIIF).

Belongs to the PlsY family. Probably interacts with PlsX.

It is found in the cell membrane. The catalysed reaction is an acyl phosphate + sn-glycerol 3-phosphate = a 1-acyl-sn-glycero-3-phosphate + phosphate. It participates in lipid metabolism; phospholipid metabolism. Catalyzes the transfer of an acyl group from acyl-phosphate (acyl-PO(4)) to glycerol-3-phosphate (G3P) to form lysophosphatidic acid (LPA). This enzyme utilizes acyl-phosphate as fatty acyl donor, but not acyl-CoA or acyl-ACP. This Streptococcus thermophilus (strain CNRZ 1066) protein is Glycerol-3-phosphate acyltransferase.